Reading from the N-terminus, the 548-residue chain is Glucose-6-phosphate isomerase 1 (548 aa).

The active-site Proton donor is Glu353. Catalysis depends on residues His384 and Lys512.

This sequence belongs to the GPI family.

The protein localises to the cytoplasm. The enzyme catalyses alpha-D-glucose 6-phosphate = beta-D-fructose 6-phosphate. It functions in the pathway carbohydrate biosynthesis; gluconeogenesis. It participates in carbohydrate degradation; glycolysis; D-glyceraldehyde 3-phosphate and glycerone phosphate from D-glucose: step 2/4. In terms of biological role, catalyzes the reversible isomerization of glucose-6-phosphate to fructose-6-phosphate. The sequence is that of Glucose-6-phosphate isomerase 1 from Neisseria gonorrhoeae (strain ATCC 700825 / FA 1090).